A 639-amino-acid chain; its full sequence is MEGINNNSQPMGVGQPHHPVNHTRPFFYVQPPSQPYFMYQWPMNPYGHYGFPGPALHFGRPYMAPYQFMQYPGYVIPHAPMQPIDYRRINPHYPSVASYDLRVRHHFQNAGMHRETACSEVQTDPSDSVNKLIDKIESLKACELGSDKGPNNVVSSTPDVVQGEKLTRLNEDSNLEVATKECKEDPVTRPTTYSDSAYDAESSQGRLDECVFSDVLPLDSSSVHEEEEEEEKDVNEEDEPQTVADEICSQNEMSASTTSNVFCSGVQSIADPTECHDLEKLGDEQKQDIPSADAAAVIEPLISLSEDFDLPYQILRLPCNKTTTGLSLEREIDPLVYFDSPSTLLPPQNYLSSIGSAYSYSYYPQVTQERQSVLSPSIDELSSRDEMFSTDVEDLEVVPGHVYVGGGRLAEASDMPVRSRKELPSVDKTCSVCQKTCACCGSTLQDEVGMCKMAEHSHPERDEMSDQDCDYDLEAEVRSNCESPRVSKRKCCSRHALPSCGHHCAKHRHRKLLCEGQESCDLREQARVHPKGECCEEYGALAKADKRIQKGALCRPCIEQQWREGVVSDQENWASCGAKPRSWRQVTGPQDQGRTPLRRSTCKSIHQQRPRSEYNDYDETEFTYCQRGRGSMKKRGSRY.

A compositionally biased stretch (basic and acidic residues) spans Ala-178–Val-187. 3 disordered regions span residues Ala-178–Gly-205, Leu-218–Thr-242, and Arg-581–Tyr-614. The span at Arg-189–Gly-205 shows a compositional bias: polar residues. Acidic residues predominate over residues Glu-225–Pro-240. Residues Arg-584–Gly-593 are compositionally biased toward polar residues. The segment covering Pro-596 to Arg-609 has biased composition (basic residues). 2 positions are modified to symmetric dimethylarginine: Arg-627 and Arg-629. 3 short sequence motifs (RG Motif) span residues Arg-627–Gly-628, Arg-629–Gly-630, and Arg-635–Gly-636.

As to quaternary structure, specifically interacts (when methylated) with tdrd6 (via Tudor domain); interaction is responsible for recruitment of different protein complexes to germ plasm. Interacts with rbpms2 and dazl; interaction mediates Balbiani body formation. Interacts with kif5ba; interaction leads to buc enrichment at the embryonic cleavage furrows and mediates dorsoventral patterning. In terms of processing, symmetric dimethylarginine modification promotes interaction with tdrd6.

The protein resides in the cytoplasm. Its subcellular location is the cleavage furrow. Its function is as follows. Prion-like protein required for the formation of Balbiani body (electron-dense aggregates in the oocyte) and germ plasm assembly, and for the establishment of oocyte polarity during early oogenesis. Mobility and aggregation properties are improved by tudor domain-containing protein tdrd6 through interaction with dimethylated arginines Tri-RG domains. Establishes oocyte polarity through interactions with RNA-binding proteins rbpms2 and dazl, initiating a positive feedback loop amplification mechanism in the Balbiani body. Interaction of BUC protein and mRNA with rbpms2 and dazl is required to mediate Balbiani body formation. Involved in recruitment of germ plasm to embryonic cleavage furrows and dorsoventral patterning through interaction with Kinesin-1/KIF5BA. The protein is Bucky ball of Danio rerio (Zebrafish).